A 667-amino-acid polypeptide reads, in one-letter code: Long-chain-fatty-acid--CoA ligase ACSBG2 (667 aa).

The span at 1-14 (MTQEKKAEDPDRGM) shows a compositional bias: basic and acidic residues. The interval 1–20 (MTQEKKAEDPDRGMDTTSAA) is disordered. Residues 227-235 (TSGTTGSPK), 418-423 (EIYGMT), Asp-496, Arg-511, and Arg-624 each bind ATP.

Belongs to the ATP-dependent AMP-binding enzyme family. Bubblegum subfamily.

It localises to the cytoplasm. Its subcellular location is the membrane. It catalyses the reaction a long-chain fatty acid + ATP + CoA = a long-chain fatty acyl-CoA + AMP + diphosphate. The enzyme catalyses (5Z,8Z,11Z,14Z)-eicosatetraenoate + ATP + CoA = (5Z,8Z,11Z,14Z)-eicosatetraenoyl-CoA + AMP + diphosphate. It carries out the reaction hexadecanoate + ATP + CoA = hexadecanoyl-CoA + AMP + diphosphate. The catalysed reaction is (9Z)-octadecenoate + ATP + CoA = (9Z)-octadecenoyl-CoA + AMP + diphosphate. It catalyses the reaction (9Z,12Z)-octadecadienoate + ATP + CoA = (9Z,12Z)-octadecadienoyl-CoA + AMP + diphosphate. The enzyme catalyses tetracosanoate + ATP + CoA = tetracosanoyl-CoA + AMP + diphosphate. Catalyzes the conversion of fatty acids such as long chain and very long-chain fatty acids to their active form acyl-CoAs for both synthesis of cellular lipids, and degradation via beta-oxidation. Can activate diverse saturated, monosaturated and polyunsaturated fatty acids. Has increased ability to activate oleic and linoleic acid. May play a role in spermatogenesis. This chain is Long-chain-fatty-acid--CoA ligase ACSBG2, found in Rattus norvegicus (Rat).